Here is a 380-residue protein sequence, read N- to C-terminus: Alcohol dehydrogenase 3 (380 aa).

8 residues coordinate Zn(2+): C48, T50, H70, C100, C103, C106, C114, and C178. Residues T50 and H70 each coordinate an alcohol. NAD(+) is bound at residue T50. Residues 203–208 (GLGAVG), D227, R232, T273, V296, 296–298 (VGV), F323, and R373 each bind NAD(+).

Belongs to the zinc-containing alcohol dehydrogenase family. As to quaternary structure, homodimer. Homotetramer. Requires Zn(2+) as cofactor.

The protein resides in the cytoplasm. It catalyses the reaction a primary alcohol + NAD(+) = an aldehyde + NADH + H(+). The enzyme catalyses a secondary alcohol + NAD(+) = a ketone + NADH + H(+). The polypeptide is Alcohol dehydrogenase 3 (ADH3) (Solanum tuberosum (Potato)).